The following is a 213-amino-acid chain: Large ribosomal subunit protein uL4 (213 aa).

The interval 41-75 is disordered; it reads GTASTKTRAEVSRSGKKMYSQKGTGNARHGDRSVP.

This sequence belongs to the universal ribosomal protein uL4 family. In terms of assembly, part of the 50S ribosomal subunit.

Functionally, one of the primary rRNA binding proteins, this protein initially binds near the 5'-end of the 23S rRNA. It is important during the early stages of 50S assembly. It makes multiple contacts with different domains of the 23S rRNA in the assembled 50S subunit and ribosome. In terms of biological role, forms part of the polypeptide exit tunnel. This Deinococcus geothermalis (strain DSM 11300 / CIP 105573 / AG-3a) protein is Large ribosomal subunit protein uL4.